A 363-amino-acid chain; its full sequence is Ribosome-binding ATPase YchF (363 aa).

In terms of domain architecture, OBG-type G spans 3-256; it reads FKCGIVGLPN…LDDEERDEFM (254 aa). 12–17 contributes to the ATP binding site; the sequence is NVGKST. 2 residues coordinate Mg(2+): serine 16 and threonine 36. In terms of domain architecture, TGS spans 278–361; the sequence is NLQTYFTAGV…KDGDVMNFLF (84 aa).

The protein belongs to the TRAFAC class OBG-HflX-like GTPase superfamily. OBG GTPase family. YchF/OLA1 subfamily. The cofactor is Mg(2+).

Its function is as follows. ATPase that binds to both the 70S ribosome and the 50S ribosomal subunit in a nucleotide-independent manner. This chain is Ribosome-binding ATPase YchF, found in Escherichia coli O157:H7.